We begin with the raw amino-acid sequence, 488 residues long: Probable glycine dehydrogenase (decarboxylating) subunit 2 (488 aa).

Lys273 carries the post-translational modification N6-(pyridoxal phosphate)lysine.

This sequence belongs to the GcvP family. C-terminal subunit subfamily. The glycine cleavage system is composed of four proteins: P, T, L and H. In this organism, the P 'protein' is a heterodimer of two subunits. Pyridoxal 5'-phosphate serves as cofactor.

It catalyses the reaction N(6)-[(R)-lipoyl]-L-lysyl-[glycine-cleavage complex H protein] + glycine + H(+) = N(6)-[(R)-S(8)-aminomethyldihydrolipoyl]-L-lysyl-[glycine-cleavage complex H protein] + CO2. The glycine cleavage system catalyzes the degradation of glycine. The P protein binds the alpha-amino group of glycine through its pyridoxal phosphate cofactor; CO(2) is released and the remaining methylamine moiety is then transferred to the lipoamide cofactor of the H protein. This is Probable glycine dehydrogenase (decarboxylating) subunit 2 from Halalkalibacterium halodurans (strain ATCC BAA-125 / DSM 18197 / FERM 7344 / JCM 9153 / C-125) (Bacillus halodurans).